Consider the following 1319-residue polypeptide: DNA (cytosine-5)-methyltransferase CMT2 (1319 aa).

Over residues 1-15 (METPPPDPVSPPPPA) the composition is skewed to pro residues. Disordered regions lie at residues 1 to 34 (METP…GGFS), 142 to 189 (ALDS…VASS), 265 to 302 (SAAS…KLPA), and 442 to 468 (KSRV…RART). Positions 266 to 279 (AASSMPLNQNGDSS) are enriched in polar residues. Residues 285–296 (RVADSRKSRSSE) show a composition bias toward basic and acidic residues. In terms of domain architecture, BAH spans 602-719 (YTFCIGECAF…IDYSTFSTIE (118 aa)). The region spanning 758–1296 (LSLLDLYCGC…YALAMAYLKK (539 aa)) is the SAM-dependent MTase C5-type domain. The 66-residue stretch at 863 to 928 (FEVWKLVDIC…EGHRQRILPR (66 aa)) folds into the Chromo domain. Residue Cys941 is part of the active site.

It localises to the nucleus. It carries out the reaction a 2'-deoxycytidine in DNA + S-adenosyl-L-methionine = a 5-methyl-2'-deoxycytidine in DNA + S-adenosyl-L-homocysteine + H(+). Involved in CpXpG DNA methylation. This Oryza sativa subsp. japonica (Rice) protein is DNA (cytosine-5)-methyltransferase CMT2.